Here is a 1777-residue protein sequence, read N- to C-terminus: MVQRKDPPSEQLRAYTLLIELLSYQFAFPVRWIETQNDLIQRNNTIQRFVEVGPSNVLANMAKKTAKGQYAEEDLVRCVDRQYLSHADDAQHIYYQYDEEAPVESADNEPAQPAASSTPAAPAPVAAPPVVVQTAPQPAAQAAVAVPDVDLSAIDVVISIVAQKIRKAFDEVPAAKSIRDLSAGKSTLQNELIGQLDAEFRGLPEGSEDLALEALASHFTNFSGRPGKVMGGHIDRLVAARMPAGFNQAKIRDYLSSHWGLGLNRQTTVLCYAVTMEPAARLADAGQATQFLDSVVSRYGGKAGIALQKRAEGGASQTSAVAQVDLASLETLKKEQNEYLHKQFQLLAKHLDLDGVAQPSQTQVQGEDTDRLAEWDAEFDEEFLTGMRTIFDPRKARRYDSWWNTAREDLMALLHDIRPAAEDKASQRYQSLVNRWSPELEQMLEHSAQDDTTKEKAQMLLDDVRASGVANGPVFRYTQPAMAPETKVDANGRIQYSEVPRRQLHGENKASTLNYAQVVAARHRDVPYAHLRSRAGVDWKYDDQLTDMFLNILSTGASTGLSFTGRRVLVTGAGVGSIGADIVAGLLAGGAHVIVTTSRQPSDVAASFRQLYAKVGAPGSELIVLPFNQASKRDCEELINHIYDEQSGYGWDLDFIIPFAAISEIGRQIDKIDSKSELAHRAMLVNLLRLLGFIKQQKEKRGFDCRPTGVLLPLSPNHGNFGGDGLYSESKLGLETLFNRFHSEGWSDFLCIIGAVIGWTRGTGLMSANNIVAQGMEDSLDILTFSAPEMAFNILSLLSGDILEVADDEPIYADLSGGLQGVSDLKDKISAIRKKIVSDSRIRQALVAENLHEQKVLRGTKPAEGNVQPPLKRRSNIEPAFPPLSDYNSVTAGLQSLKGMVDLSRTVVVVGYSELGPWGSSRTRWEMEHEGRLSLEGYTELAWMMGLIKHFDGDLKGKPYTGWVDSKTKEAVDEADIEEKYGQHILGHAGIRVIEPELSEGYDPSQKEIMHEVVIDEDLPPFEAPQGVAQAFKLRHGDKVILTPIEGSESVKVVVKSGAVFMVPKAMAFNRFVAGQLPSGWDPTRYGIPEDIVAQVDPMTVYVLCCVSEAMYSAGLEDPFELYRHIHVSELANCVGTGAGGLLAMRGVYRDRYLDRPVQSDILQESFLNAMNAWTNMLLMGAAGPIKSPSGTCATSVESMDIACEAIQTLKAKVAIVGGSDDFQEEMSYEFGNMKATANAEDELEKGYLPSEMSRPTASSRSGFVESAGCGIQLVMSAELALQMGLPIYGIVAYSQMAGDKVGRSVPAPGQGVLTAARESIDAAQSPLLDVQYRKARLDEAVSEIKRWRHKESQKLIASTTSKEFKDLDAHLQHINNIAATRIRDAQWTWNNNIRHIDPTIAPMRAALATWGLSVDDIQVASFHGTSTKANDKNESNVINQQMTHLSRTVGNPLLVICQKSLTGHPKGAAGAWMFNGCLQALQTGIVPGNRNADNVDVALQQFKHLVYPSQTIHTSGIKAFMLTSFGFGQKGGLVVGIAPRYLFSTITANKFEDYRERVLQRQQKIIPVFQRRMAQGRLFQIKDQSAWTSDQEKDVFLNPQARVAQKSTGEYSFPTTVAPVASSLPARTVSDDKQLFARSSDQWLRDSISKEQGNVSVGVDIESISSVNIEDEIFLERNFTPGELKYCQGSPDKQASLSGRWAAKEAIFKSLQIPSEGAGAAMRDIEIVSNGAQPPTVLLHNRAKSAADAQKVEEVQVSITHSPESAMAIALARRRL.

Positions 101 to 124 (APVESADNEPAQPAASSTPAAPAP) are disordered. Residues 110 to 120 (PAQPAASSTPA) show a composition bias toward low complexity. One can recognise a Carrier domain in the interval 151-237 (LSAIDVVISI…KVMGGHIDRL (87 aa)). Ser-186 carries the post-translational modification O-(pantetheine 4'-phosphoryl)serine. The tract at residues 563–803 (FTGRRVLVTG…ILSLLSGDIL (241 aa)) is ketoreductase (KR) domain. The region spanning 1007 to 1539 (KEIMHEVVID…QKGGLVVGIA (533 aa)) is the Ketosynthase family 3 (KS3) domain. Catalysis depends on for beta-ketoacyl synthase activity residues Cys-1193, His-1424, and His-1465. Asp-1661 contributes to the Mg(2+) binding site. Acetyl-CoA contacts are provided by residues 1661 to 1663 (DIE), 1706 to 1716 (EAIFKSLQIPS), 1730 to 1734 (SNGAQ), and 1760 to 1762 (ITH).

This sequence belongs to the thiolase-like superfamily. Fungal fatty acid synthetase subunit alpha family. In terms of assembly, fatty acid synthase is composed of alpha and beta subunits.

The enzyme catalyses acetyl-CoA + n malonyl-CoA + 2n NADPH + 4n H(+) = a long-chain-acyl-CoA + n CoA + n CO2 + 2n NADP(+).. It carries out the reaction a fatty acyl-[ACP] + malonyl-[ACP] + H(+) = a 3-oxoacyl-[ACP] + holo-[ACP] + CO2. The catalysed reaction is a (3R)-hydroxyacyl-[ACP] + NADP(+) = a 3-oxoacyl-[ACP] + NADPH + H(+). The protein operates within secondary metabolite biosynthesis. Functionally, fatty acid synthase alpha subunit; part of the gene cluster that mediates the biosynthesis of oryzines, natural products with an unusual maleidride backbone. The two subunits of the fungal fatty acid synthase oryfasA and oryfasB probably form octenoic acid. This fatty acid is most likely activated by the acyl-CoA ligase oryP to give octenyl-CoA before the citrate synthase-like protein oryE catalyzes condensation with oxaloacetate to form tricarboxylic acid. The next steps of the pathways are conjectural, but a favorite possible route has been proposed, beginning with decarboxylation and concomitant dehydration by the decarboxylase oryM, followed by tautomerization, which may lead to the production of a diene intermediate. Reduction of this diene intermediate could give the known metabolite piliformic acid. On the pathway to oryzine B and oryzine A, however, hydroxylation of the diene by the alpha-ketoglutarate-dependent dioxygenase oryG and lactonisation by the lactonohydrolases oryH or oryL could give oryzine B directly. Finally, enoyl reduction by the dehydrogenase oryD would then convert oryzine B into oryzine A. The chain is Fatty acid synthase subunit alpha from Aspergillus oryzae (strain ATCC 42149 / RIB 40) (Yellow koji mold).